The sequence spans 286 residues: Shikimate dehydrogenase (NADP(+)) (286 aa).

Residues 25–27 (SLS) and threonine 72 contribute to the shikimate site. The active-site Proton acceptor is the lysine 76. NADP(+) is bound at residue glutamate 88. Residues asparagine 97 and aspartate 113 each coordinate shikimate. NADP(+) contacts are provided by residues 138-142 (GSGGA), 162-167 (NRTIER), and isoleucine 232. Shikimate is bound at residue tyrosine 234. Glycine 255 provides a ligand contact to NADP(+).

The protein belongs to the shikimate dehydrogenase family. In terms of assembly, homodimer.

It carries out the reaction shikimate + NADP(+) = 3-dehydroshikimate + NADPH + H(+). It functions in the pathway metabolic intermediate biosynthesis; chorismate biosynthesis; chorismate from D-erythrose 4-phosphate and phosphoenolpyruvate: step 4/7. Its function is as follows. Involved in the biosynthesis of the chorismate, which leads to the biosynthesis of aromatic amino acids. Catalyzes the reversible NADPH linked reduction of 3-dehydroshikimate (DHSA) to yield shikimate (SA). This Magnetococcus marinus (strain ATCC BAA-1437 / JCM 17883 / MC-1) protein is Shikimate dehydrogenase (NADP(+)).